The following is a 621-amino-acid chain: Type 2 DNA topoisomerase 6 subunit B (621 aa).

ATP-binding positions include N48, D80, 101–102, 111–118, and K435; these read SR and GQQGIGIS.

The protein belongs to the TOP6B family. Homodimer. Heterotetramer of two Top6A and two Top6B chains.

The enzyme catalyses ATP-dependent breakage, passage and rejoining of double-stranded DNA.. Functionally, relaxes both positive and negative superturns and exhibits a strong decatenase activity. This Methanosarcina mazei (strain ATCC BAA-159 / DSM 3647 / Goe1 / Go1 / JCM 11833 / OCM 88) (Methanosarcina frisia) protein is Type 2 DNA topoisomerase 6 subunit B.